Here is a 428-residue protein sequence, read N- to C-terminus: UDP-N-acetylglucosamine 1-carboxyvinyltransferase 2 (428 aa).

22–23 (KN) serves as a coordination point for phosphoenolpyruvate. Residue Arg92 participates in UDP-N-acetyl-alpha-D-glucosamine binding. Cys116 functions as the Proton donor in the catalytic mechanism. Cys116 is modified (2-(S-cysteinyl)pyruvic acid O-phosphothioketal). UDP-N-acetyl-alpha-D-glucosamine-binding positions include 121–125 (RPIDQ), Asp304, and Ile326.

Belongs to the EPSP synthase family. MurA subfamily.

The protein localises to the cytoplasm. The catalysed reaction is phosphoenolpyruvate + UDP-N-acetyl-alpha-D-glucosamine = UDP-N-acetyl-3-O-(1-carboxyvinyl)-alpha-D-glucosamine + phosphate. It functions in the pathway cell wall biogenesis; peptidoglycan biosynthesis. In terms of biological role, cell wall formation. Adds enolpyruvyl to UDP-N-acetylglucosamine. The protein is UDP-N-acetylglucosamine 1-carboxyvinyltransferase 2 of Oceanobacillus iheyensis (strain DSM 14371 / CIP 107618 / JCM 11309 / KCTC 3954 / HTE831).